We begin with the raw amino-acid sequence, 428 residues long: GTPase Obg (428 aa).

Residues methionine 1–leucine 158 enclose the Obg domain. The OBG-type G domain occupies alanine 159–glutamate 329. GTP is bound by residues glycine 165–serine 172, phenylalanine 190–valine 194, aspartate 212–glycine 215, asparagine 282–aspartate 285, and serine 310–valine 312. Mg(2+)-binding residues include serine 172 and threonine 192. An OCT domain is found at lysine 350–aspartate 428.

It belongs to the TRAFAC class OBG-HflX-like GTPase superfamily. OBG GTPase family. In terms of assembly, monomer. It depends on Mg(2+) as a cofactor.

The protein localises to the cytoplasm. Its function is as follows. An essential GTPase which binds GTP, GDP and possibly (p)ppGpp with moderate affinity, with high nucleotide exchange rates and a fairly low GTP hydrolysis rate. Plays a role in control of the cell cycle, stress response, ribosome biogenesis and in those bacteria that undergo differentiation, in morphogenesis control. This chain is GTPase Obg, found in Bacillus anthracis.